The following is a 205-amino-acid chain: Recombination protein RecR (205 aa).

The C4-type zinc-finger motif lies at Cys-60–Cys-75. In terms of domain architecture, Toprim spans Ser-83–Ser-178.

This sequence belongs to the RecR family.

Its function is as follows. May play a role in DNA repair. It seems to be involved in an RecBC-independent recombinational process of DNA repair. It may act with RecF and RecO. The chain is Recombination protein RecR from Bacteroides thetaiotaomicron (strain ATCC 29148 / DSM 2079 / JCM 5827 / CCUG 10774 / NCTC 10582 / VPI-5482 / E50).